We begin with the raw amino-acid sequence, 458 residues long: UDP-N-acetylmuramate--L-alanine ligase (458 aa).

Residue 118 to 124 (GTHGKTT) participates in ATP binding.

It belongs to the MurCDEF family.

The protein localises to the cytoplasm. It catalyses the reaction UDP-N-acetyl-alpha-D-muramate + L-alanine + ATP = UDP-N-acetyl-alpha-D-muramoyl-L-alanine + ADP + phosphate + H(+). It functions in the pathway cell wall biogenesis; peptidoglycan biosynthesis. Functionally, cell wall formation. The protein is UDP-N-acetylmuramate--L-alanine ligase of Clostridium botulinum (strain Loch Maree / Type A3).